A 108-amino-acid chain; its full sequence is Probable 4-amino-4-deoxy-L-arabinose-phosphoundecaprenol flippase subunit ArnE (108 aa).

A run of 3 helical transmembrane segments spans residues 32 to 52 (PLLLWLGGSVLLLGMAMLVWL), 58 to 78 (VPVGVAYPMLSLNFIFVTLAA), and 85 to 105 (TLSLRHALGVILIVAGVAIMG). The 73-residue stretch at 34 to 106 (LLWLGGSVLL…IVAGVAIMGS (73 aa)) folds into the EamA domain.

This sequence belongs to the ArnE family. Heterodimer of ArnE and ArnF.

Its subcellular location is the cell inner membrane. Its pathway is bacterial outer membrane biogenesis; lipopolysaccharide biosynthesis. Translocates 4-amino-4-deoxy-L-arabinose-phosphoundecaprenol (alpha-L-Ara4N-phosphoundecaprenol) from the cytoplasmic to the periplasmic side of the inner membrane. This Erwinia tasmaniensis (strain DSM 17950 / CFBP 7177 / CIP 109463 / NCPPB 4357 / Et1/99) protein is Probable 4-amino-4-deoxy-L-arabinose-phosphoundecaprenol flippase subunit ArnE.